The chain runs to 205 residues: MGPIRIGVGGPVGAGKTQLVERITRALIDEVSMAAITNDIYTIEDAKILAANGVLPEERIVGIETGGCPHTAIREDTSMNDAAIKDLVERFPDLELIFVESGGDNLSATFSPELVDFSIYIIDVAQGEKIPRKAGQGMIKSDLFIINKTDLAPYVGANLDVMVEDAKAFRKNKPFCLTNLRTDDGLDKVLEWIRHEVMMQDLQEA.

10-17 serves as a coordination point for GTP; it reads GPVGAGKT.

It belongs to the SIMIBI class G3E GTPase family. UreG subfamily. Homodimer. UreD, UreF and UreG form a complex that acts as a GTP-hydrolysis-dependent molecular chaperone, activating the urease apoprotein by helping to assemble the nickel containing metallocenter of UreC. The UreE protein probably delivers the nickel.

The protein resides in the cytoplasm. Facilitates the functional incorporation of the urease nickel metallocenter. This process requires GTP hydrolysis, probably effectuated by UreG. The chain is Urease accessory protein UreG from Corynebacterium glutamicum (strain ATCC 13032 / DSM 20300 / JCM 1318 / BCRC 11384 / CCUG 27702 / LMG 3730 / NBRC 12168 / NCIMB 10025 / NRRL B-2784 / 534).